The primary structure comprises 359 residues: 4-galactosyl-N-acetylglucosaminide 3-alpha-L-fucosyltransferase 9 (359 aa).

Residues 1–11 (MTSTSKGILRP) are Cytoplasmic-facing. Residues 12–32 (FLIVCIILGCFMACLLIYIKP) form a helical; Signal-anchor for type II membrane protein membrane-spanning segment. Over 33–359 (TNSWIFSPME…VGNLEKWFWN (327 aa)) the chain is Lumenal. N-linked (GlcNAc...) asparagine glycosylation occurs at N62. The tract at residues 63-168 (ETTILVWVWP…RRDSDIQVPY (106 aa)) is acceptor-binding. An a beta-D-galactosyl-(1-&gt;4)-N-acetyl-beta-D-glucosaminyl derivative-binding site is contributed by Q75. Disulfide bonds link C82-C335, C91-C338, and C190-C238. A glycan (N-linked (GlcNAc...) asparagine) is linked at N101. E137 provides a ligand contact to a beta-D-galactosyl-(1-&gt;4)-N-acetyl-beta-D-glucosaminyl derivative. Catalysis depends on E137, which acts as the Nucleophile. E137 serves as a coordination point for GDP-beta-L-fucose. The N-linked (GlcNAc...) asparagine glycan is linked to N153. 11 residues coordinate GDP-beta-L-fucose: Y168, V192, S194, N195, R202, V226, Y241, N246, Y252, E255, and K256. The tract at residues 169 to 326 (GFLTVSTNPF…NWRKDFTVNL (158 aa)) is donor-binding. Residues 327–359 (PRFWESHACLACDHVKRHQEYKSVGNLEKWFWN) are acceptor-binding.

It belongs to the glycosyltransferase 10 family. As to quaternary structure, homodimer. In terms of processing, N-glycosylated with complex-type N-glycans. The glycan alpha-D-Man-(1-&gt;3)-beta-D-Man-(1-&gt;4)-GlcNAc-(1-&gt;4)-GlcNAc is attached at Asn-153. In terms of tissue distribution, strongly expressed in forebrain and stomach, lower expression in spleen and peripheral blood leukocytes, and no expression in small intestine, colon, liver, lung, kidney, adrenal cortex or uterus. Highly expressed in granulocytes. Not expressed in monocytes.

It localises to the golgi apparatus. Its subcellular location is the trans-Golgi network membrane. The protein resides in the golgi apparatus membrane. The catalysed reaction is a beta-D-galactosyl-(1-&gt;4)-N-acetyl-beta-D-glucosaminyl derivative + GDP-beta-L-fucose = a beta-D-galactosyl-(1-&gt;4)-[alpha-L-fucosyl-(1-&gt;3)]-N-acetyl-beta-D-glucosaminyl derivative + GDP + H(+). It carries out the reaction an alpha-Neu5Ac-(2-&gt;3)-beta-D-Gal-(1-&gt;4)-beta-D-GlcNAc-(1-&gt;3)-beta-D-Gal-(1-&gt;4)-beta-D-GlcNAc derivative + GDP-beta-L-fucose = an alpha-Neu5Ac-(2-&gt;3)-beta-D-Gal-(1-&gt;4)-beta-D-GlcNAc-(1-&gt;3)-beta-D-Gal-(1-&gt;4)-[alpha-L-Fuc-(1-&gt;3)]-beta-D-GlcNAc derivative + GDP + H(+). The enzyme catalyses alpha-N-glycoloylneuraminosyl-(2-&gt;3)-beta-D-galactosyl-(1-&gt;4)-N-acetyl-beta-D-glucosaminyl-(1-&gt;3)-beta-D-galactosyl-(1-&gt;4)-N-acetyl-beta-D-glucosaminyl-(1-&gt;3)-beta-D-galactosyl-(1-&gt;4)-beta-D-glucosyl-(1&lt;-&gt;1')-ceramide + GDP-beta-L-fucose = alpha-N-glycoloylneuraminosyl-(2-&gt;3)-beta-D-galactosyl-(1-&gt;4)-N-acetyl-beta-D-glucosaminyl-(1-&gt;3)-beta-D-galactosyl-(1-&gt;4)-[alpha-L-fucosyl-(1-&gt;3)]-N-acetyl-beta-D-glucosaminyl-(1-&gt;3)-beta-D-galactosyl-(1-&gt;4)-beta-D-glucosyl-(1&lt;-&gt;1')-ceramide + GDP + H(+). It catalyses the reaction alpha-D-galactosyl-(1-&gt;3)-beta-D-galactosyl-(1-&gt;4)-N-acetyl-beta-D-glucosaminyl-(1-&gt;3)-beta-D-galactosyl-(1-&gt;4)-beta-D-glucosyl-(1&lt;-&gt;1')-ceramide + GDP-beta-L-fucose = a neolactoside IV(3)-alpha-Gal,III(3)-alpha-Fuc-nLc4Cer + GDP + H(+). The catalysed reaction is a neolactoside nLc4Cer + GDP-beta-L-fucose = a neolactoside III(3)-alpha-Fuc-nLc4Cer + GDP + H(+). It carries out the reaction an N-acetyl-alpha-neuraminyl-(2-&gt;3)-beta-D-galactosyl-(1-&gt;4)-N-acetyl-beta-D-glucosaminyl derivative + GDP-beta-L-fucose = an alpha-Neu5Ac-(2-&gt;3)-beta-D-Gal-(1-&gt;4)-[alpha-L-Fuc-(1-&gt;3)]-beta-D-GlcNAc derivative + GDP + H(+). The enzyme catalyses beta-D-Gal-(1-&gt;4)-beta-D-GlcNAc-(1-&gt;3)-beta-D-Gal-(1-&gt;4)-D-Glc + GDP-beta-L-fucose = beta-D-Gal-(1-&gt;4)-[alpha-L-Fuc-(1-&gt;3)]-beta-D-GlcNAc-(1-&gt;3)-beta-D-Gal-(1-&gt;4)-D-Glc + GDP + H(+). It catalyses the reaction an alpha-L-Fuc-(1-&gt;2)-beta-D-Gal-(1-&gt;4)-beta-D-GlcNAc derivative + GDP-beta-L-fucose = an alpha-L-Fuc-(1-&gt;2)-beta-D-Gal-(1-&gt;4)-[alpha-L-Fuc-(1-&gt;3)]-beta-D-GlcNAc derivative + GDP + H(+). It participates in protein modification; protein glycosylation. It functions in the pathway glycolipid biosynthesis. Its activity is regulated as follows. Activated by Mn2+. Functionally, catalyzes alpha(1-&gt;3) linkage of fucosyl moiety transferred from GDP-beta-L-fucose to N-acetyl glucosamine (GlcNAc) within type 2 lactosamine (LacNAc, beta-D-Gal-(1-&gt;4)-beta-D-GlcNAc-) glycan attached to glycolipids and N- or O-linked glycoproteins. Fucosylates distal type 2 LacNAc and its fucosylated (H-type 2 LacNAc) and sialylated (sialyl-type 2 LacNAc) derivatives to form Lewis x (Lex) (CD15) and Lewis y (Ley) antigenic epitopes involved in cell adhesion and differentiation. Generates Lex epitopes in the brain, presumably playing a role in the maintenance of neuronal stemness and neurite outgrowth in progenitor neural cells. Fucosylates the internal type 2 LacNAc unit of the polylactosamine chain to form VIM-2 antigen that serves as recognition epitope for SELE. Can also modify milk oligosaccharides, in particular type 2 tetrasaccharide LNnT. This is 4-galactosyl-N-acetylglucosaminide 3-alpha-L-fucosyltransferase 9 from Homo sapiens (Human).